The sequence spans 251 residues: Ubiquinone/menaquinone biosynthesis C-methyltransferase UbiE (251 aa).

S-adenosyl-L-methionine-binding residues include threonine 74, aspartate 92, and serine 132.

Belongs to the class I-like SAM-binding methyltransferase superfamily. MenG/UbiE family.

It carries out the reaction a 2-demethylmenaquinol + S-adenosyl-L-methionine = a menaquinol + S-adenosyl-L-homocysteine + H(+). The enzyme catalyses a 2-methoxy-6-(all-trans-polyprenyl)benzene-1,4-diol + S-adenosyl-L-methionine = a 5-methoxy-2-methyl-3-(all-trans-polyprenyl)benzene-1,4-diol + S-adenosyl-L-homocysteine + H(+). Its pathway is quinol/quinone metabolism; menaquinone biosynthesis; menaquinol from 1,4-dihydroxy-2-naphthoate: step 2/2. It functions in the pathway cofactor biosynthesis; ubiquinone biosynthesis. In terms of biological role, methyltransferase required for the conversion of demethylmenaquinol (DMKH2) to menaquinol (MKH2) and the conversion of 2-polyprenyl-6-methoxy-1,4-benzoquinol (DDMQH2) to 2-polyprenyl-3-methyl-6-methoxy-1,4-benzoquinol (DMQH2). In Rubrivivax gelatinosus (strain NBRC 100245 / IL144), this protein is Ubiquinone/menaquinone biosynthesis C-methyltransferase UbiE.